Here is a 133-residue protein sequence, read N- to C-terminus: Ribonuclease VapC10 (133 aa).

Residues 2–119 (ILVDSDVLIA…NVWHFPMFEQ (118 aa)) form the PINc domain. 2 residues coordinate Mg(2+): Asp-5 and Asp-92.

This sequence belongs to the PINc/VapC protein family. Mg(2+) is required as a cofactor.

Its function is as follows. Toxic component of a type II toxin-antitoxin (TA) system. An RNase. The cognate antitoxin is VapB10. The sequence is that of Ribonuclease VapC10 from Mycobacterium tuberculosis (strain CDC 1551 / Oshkosh).